The primary structure comprises 330 residues: Glycerol-3-phosphate dehydrogenase [NAD(P)+] (330 aa).

Residues serine 10, tryptophan 11, arginine 31, and lysine 105 each contribute to the NADPH site. The sn-glycerol 3-phosphate site is built by lysine 105, glycine 135, and serine 137. Alanine 139 is an NADPH binding site. Residues lysine 190, aspartate 243, serine 253, arginine 254, and asparagine 255 each coordinate sn-glycerol 3-phosphate. Catalysis depends on lysine 190, which acts as the Proton acceptor. An NADPH-binding site is contributed by arginine 254. The NADPH site is built by valine 278 and glutamate 280.

The protein belongs to the NAD-dependent glycerol-3-phosphate dehydrogenase family.

It is found in the cytoplasm. It carries out the reaction sn-glycerol 3-phosphate + NAD(+) = dihydroxyacetone phosphate + NADH + H(+). The enzyme catalyses sn-glycerol 3-phosphate + NADP(+) = dihydroxyacetone phosphate + NADPH + H(+). The protein operates within membrane lipid metabolism; glycerophospholipid metabolism. Its function is as follows. Catalyzes the reduction of the glycolytic intermediate dihydroxyacetone phosphate (DHAP) to sn-glycerol 3-phosphate (G3P), the key precursor for phospholipid synthesis. This Solidesulfovibrio magneticus (strain ATCC 700980 / DSM 13731 / RS-1) (Desulfovibrio magneticus) protein is Glycerol-3-phosphate dehydrogenase [NAD(P)+].